The primary structure comprises 319 residues: MALECDSTIVFPRPLTRLVKCDLELRNTAPYPIGFKVKTTAPKQYCVRPNGGRIEANSAVSVEVILQPLDHEPAPGTKCRDKFLVQSTELKPELQGMDIADIWTQVSKANISERKIRCVYSEGPSTANAHANAHHQPAQTTTTSIPTSATDNYTTVNGNVNQSYSKGIDGTALPSTHANPVAAPSTATTQHTQLPKTSAVSHQKPHEAPSTAVKAPTATVAENEPYPKPQSVPTTTSPNNENNALRSTANVINNTRQSTATSPSMFAGNSGNQIGLARVSSSFGRPTSGAKVVPQIHNTVTVQTAFLLAIICFLIGLLF.

One can recognise an MSP domain in the interval 1–121 (MALECDSTIV…SERKIRCVYS (121 aa)). The Cytoplasmic segment spans residues 1–298 (MALECDSTIV…GAKVVPQIHN (298 aa)). Residues 127–150 (ANAHANAHHQPAQTTTTSIPTSAT) show a composition bias toward low complexity. The tract at residues 127–244 (ANAHANAHHQ…TTSPNNENNA (118 aa)) is disordered. 3 stretches are compositionally biased toward polar residues: residues 151–165 (DNYT…QSYS), 185–201 (STAT…SAVS), and 231–244 (SVPT…ENNA). Thr236 carries the post-translational modification Phosphothreonine. Ser237 and Ser281 each carry phosphoserine. Residues 299–319 (TVTVQTAFLLAIICFLIGLLF) form a helical; Anchor for type IV membrane protein membrane-spanning segment.

Belongs to the VAMP-associated protein (VAP) (TC 9.B.17) family. Interacts with epr1.

It is found in the endoplasmic reticulum membrane. Functionally, vesicle-associated membrane protein-associated protein (VAP) implicated in maintaining the cortical endoplasmic reticulum (ER)-plasma membrane (PM) attachment. ER-PM contacts function to modulate the distribution of contractile ring components to ensure robust ring assembly. ER-PM contacts function also in controlling exocytosis and maintenance of cell polarity regulating cell shape. VAPs play an important role in regulating eisosome assembly. VAPs also contribute to ER-phagy by tethering atg8 to the ER membrane, but also by maintaining the ER-plasma membrane contact. This chain is Vesicle-associated membrane protein-associated protein scs22 (scs22), found in Schizosaccharomyces pombe (strain 972 / ATCC 24843) (Fission yeast).